The following is a 259-amino-acid chain: E3 ubiquitin-protein ligase RNF170 (259 aa).

Residues 1–25 lie on the Lumenal side of the membrane; it reads MAKYQGEVQSLKLDDDSVIEGVSDQ. The helical transmembrane segment at 26–46 threads the bilayer; the sequence is VLVAVVVSLALIATLVYALFS. Topologically, residues 47 to 202 are cytoplasmic; the sequence is RNAHQNIHPE…GGLFWMFRIR (156 aa). Residues 88–131 form an RING-type zinc finger; sequence CPICLHQASLPVETNCGHLFCGTCIVAYWRYGSWLGAISCPICR. A helical membrane pass occupies residues 203–223; sequence IILCLMGAFFYLISPLDFVPE. Residue Ala-224 is a topological domain, lumenal. Residues 225–245 form a helical membrane-spanning segment; sequence LFGILGFLDDFFVIFLLLIYI. The Cytoplasmic segment spans residues 246–259; sequence SIMYREVITQRLNR.

Constitutively associated with the ERLIN1/ERLIN 2 complex. Interacts with activated ITPR1.

Its subcellular location is the endoplasmic reticulum membrane. The catalysed reaction is S-ubiquitinyl-[E2 ubiquitin-conjugating enzyme]-L-cysteine + [acceptor protein]-L-lysine = [E2 ubiquitin-conjugating enzyme]-L-cysteine + N(6)-ubiquitinyl-[acceptor protein]-L-lysine.. It functions in the pathway protein modification; protein ubiquitination. E3 ubiquitin-protein ligase. Plays an essential role in stimulus-induced inositol 1,4,5-trisphosphate receptor type 1 (ITPR1) ubiquitination and degradation via the endoplasmic reticulum-associated degradation (ERAD) pathway. Also involved in ITPR1 turnover in resting cells. Selectively inhibits the TLR3-triggered innate immune response by promoting the 'Lys-48'-linked polyubiquitination and degradation of TLR3. The polypeptide is E3 ubiquitin-protein ligase RNF170 (RNF170) (Bos taurus (Bovine)).